The sequence spans 388 residues: MGILGLSKLIADLAPLAIRESEIKNFFGRKVAIDASMCLYQFLIAVRSEGAQLAAVNGDPTSHLMGMFYRTIRLLDNGIKPVYVFDGAPPDMKSGELAKRAERRDEAEKALKAATEAGDEAQIEKFNRRLVRVTKEHSREAKELLKLMGVPYVDAPCEAEAQCAALVKAGKVYATATEDMDALTFGSCKLLRYLTYSEARKMPVKEFSYDKVLQGLELTSKEFIDLCILMGCDYCESIRGVGPKRAIELIKSYRDIETILENIDTNKYAVPENWNYKRARELFIEPDVTDASTIDLKWTDPDEDGLVQFLCGDRQFNEERVRNGAKKLLKSKQAQTQVRLDSFFKTLPSSPNAIAAAKRKAEESKKSANSKKAKIGGGSGAGRGRRPK.

The segment at 1 to 104 (MGILGLSKLI…GELAKRAERR (104 aa)) is N-domain. Asp-34 is a Mg(2+) binding site. Residues Arg-47 and Arg-70 each coordinate DNA. The Mg(2+) site is built by Asp-86, Glu-158, Glu-160, Asp-179, and Asp-181. Residues 122–253 (QIEKFNRRLV…KRAIELIKSY (132 aa)) are I-domain. Residue Glu-158 participates in DNA binding. DNA is bound by residues Gly-231 and Asp-233. A Mg(2+)-binding site is contributed by Asp-233. The segment at 336–344 (TQVRLDSFF) is interaction with PCNA. The segment at 355–388 (AAAKRKAEESKKSANSKKAKIGGGSGAGRGRRPK) is disordered.

This sequence belongs to the XPG/RAD2 endonuclease family. FEN1 subfamily. Interacts with PCNA. Three molecules of FEN1 bind to one PCNA trimer with each molecule binding to one PCNA monomer. PCNA stimulates the nuclease activity without altering cleavage specificity. Mg(2+) is required as a cofactor. Post-translationally, phosphorylated. Phosphorylation upon DNA damage induces relocalization to the nuclear plasma.

The protein resides in the nucleus. The protein localises to the nucleolus. Its subcellular location is the nucleoplasm. It localises to the mitochondrion. In terms of biological role, structure-specific nuclease with 5'-flap endonuclease and 5'-3' exonuclease activities involved in DNA replication and repair. During DNA replication, cleaves the 5'-overhanging flap structure that is generated by displacement synthesis when DNA polymerase encounters the 5'-end of a downstream Okazaki fragment. It enters the flap from the 5'-end and then tracks to cleave the flap base, leaving a nick for ligation. Also involved in the long patch base excision repair (LP-BER) pathway, by cleaving within the apurinic/apyrimidinic (AP) site-terminated flap. Acts as a genome stabilization factor that prevents flaps from equilibrating into structures that lead to duplications and deletions. Also possesses 5'-3' exonuclease activity on nicked or gapped double-stranded DNA, and exhibits RNase H activity. Also involved in replication and repair of rDNA and in repairing mitochondrial DNA. The chain is Flap endonuclease 1 from Drosophila grimshawi (Hawaiian fruit fly).